The chain runs to 282 residues: Large ribosomal subunit protein uL2 (282 aa).

Disordered stretches follow at residues 26–55 and 218–266; these read KKSP…RHRG and PHVR…HNKS. A compositionally biased stretch (polar residues) spans 34–43; the sequence is LESQSHTAGR. The segment covering 254 to 266 has biased composition (basic residues); the sequence is TIGKKTRNKHNKS.

It belongs to the universal ribosomal protein uL2 family. As to quaternary structure, part of the 50S ribosomal subunit. Forms a bridge to the 30S subunit in the 70S ribosome.

In terms of biological role, one of the primary rRNA binding proteins. Required for association of the 30S and 50S subunits to form the 70S ribosome, for tRNA binding and peptide bond formation. It has been suggested to have peptidyltransferase activity; this is somewhat controversial. Makes several contacts with the 16S rRNA in the 70S ribosome. In Pediococcus pentosaceus (strain ATCC 25745 / CCUG 21536 / LMG 10740 / 183-1w), this protein is Large ribosomal subunit protein uL2.